The primary structure comprises 361 residues: 3-dehydroquinate synthase (361 aa).

Residues 104 to 108 (GVIGD), 128 to 129 (TT), Lys140, and Lys149 each bind NAD(+). Residues Glu182, His245, and His262 each coordinate Zn(2+).

The protein belongs to the sugar phosphate cyclases superfamily. Dehydroquinate synthase family. It depends on NAD(+) as a cofactor. The cofactor is Co(2+). Requires Zn(2+) as cofactor.

It localises to the cytoplasm. The catalysed reaction is 7-phospho-2-dehydro-3-deoxy-D-arabino-heptonate = 3-dehydroquinate + phosphate. It participates in metabolic intermediate biosynthesis; chorismate biosynthesis; chorismate from D-erythrose 4-phosphate and phosphoenolpyruvate: step 2/7. Its function is as follows. Catalyzes the conversion of 3-deoxy-D-arabino-heptulosonate 7-phosphate (DAHP) to dehydroquinate (DHQ). The chain is 3-dehydroquinate synthase from Halalkalibacterium halodurans (strain ATCC BAA-125 / DSM 18197 / FERM 7344 / JCM 9153 / C-125) (Bacillus halodurans).